Here is a 126-residue protein sequence, read N- to C-terminus: MAILGLGTDIVEIARIEAVIARSGDRLARRVLSDNEWAIWKTHHQPVRFLAKRFAVKEAAAKAFGTGIRNGLAFNQFEVFNDELGKPRLRLWGEALKLAEKLGVANMHVTLADERHYACATVIIES.

2 residues coordinate Mg(2+): aspartate 9 and glutamate 58.

This sequence belongs to the P-Pant transferase superfamily. AcpS family. Mg(2+) is required as a cofactor.

It is found in the cytoplasm. It catalyses the reaction apo-[ACP] + CoA = holo-[ACP] + adenosine 3',5'-bisphosphate + H(+). In terms of biological role, transfers the 4'-phosphopantetheine moiety from coenzyme A to a Ser of acyl-carrier-protein. The protein is Holo-[acyl-carrier-protein] synthase of Escherichia coli (strain K12 / MC4100 / BW2952).